The following is a 561-amino-acid chain: Cytochrome P450 monooxygenase iboC (561 aa).

The chain crosses the membrane as a helical span at residues 8–28; that stretch reads RFYYQLLAAVLIPALFVAWAA. Cys484 provides a ligand contact to heme.

It belongs to the cytochrome P450 family. The cofactor is heme.

The protein localises to the membrane. The protein operates within secondary metabolite biosynthesis. Cytochrome P450 monooxygenase; part of the gene cluster that mediates the biosynthesis of the psychoactive metabolites ibotenic acid and muscimol. The first committed step is glutamate hydroxylation by the 2-oxoglutarate-dependent dioxygenase iboH, and the last step is decarboxylation of ibotenic acid to muscimol by the decarboxylase iboD. The order of the intermediate reactions is somewhat ambiguous. IboA likely activates the carboxylic acid at position 5 to introduce an amide bond, and the flavin monooxygenase iboF generates the N-O bond. There are several options for the latter step. One option is that iboF directly hydroxylates the amide nitrogen formed by iboA to produce a hydroxamic acid species. Another option is that iboF hydroxylates an external N-containing compound, whose resulting N-O bond is subsequently introduced into the hydroxyglutamate scaffold. The paralogous PLP-dependent cystathionine gamma-synthase-like enzymes iboG1 and iboG2 are likely involved in substitution of the OH group at position 3 by the O-N moiety. The first cyclic intermediate is most probably tricholomic acid which is likely desaturated to ibotenic acid by the cytochrome P450 monooxygenase iboC. The chain is Cytochrome P450 monooxygenase iboC from Amanita muscaria (strain Koide BX008).